The sequence spans 247 residues: Small ribosomal subunit protein uS2 (247 aa).

This sequence belongs to the universal ribosomal protein uS2 family.

In Halorhodospira halophila (strain DSM 244 / SL1) (Ectothiorhodospira halophila (strain DSM 244 / SL1)), this protein is Small ribosomal subunit protein uS2.